Reading from the N-terminus, the 510-residue chain is ATP synthase subunit alpha (510 aa).

169–176 (GDRQTGKT) is a binding site for ATP.

The protein belongs to the ATPase alpha/beta chains family. F-type ATPases have 2 components, CF(1) - the catalytic core - and CF(0) - the membrane proton channel. CF(1) has five subunits: alpha(3), beta(3), gamma(1), delta(1), epsilon(1). CF(0) has three main subunits: a(1), b(2) and c(9-12). The alpha and beta chains form an alternating ring which encloses part of the gamma chain. CF(1) is attached to CF(0) by a central stalk formed by the gamma and epsilon chains, while a peripheral stalk is formed by the delta and b chains.

Its subcellular location is the cell inner membrane. It carries out the reaction ATP + H2O + 4 H(+)(in) = ADP + phosphate + 5 H(+)(out). Its function is as follows. Produces ATP from ADP in the presence of a proton gradient across the membrane. The alpha chain is a regulatory subunit. This is ATP synthase subunit alpha from Afipia carboxidovorans (strain ATCC 49405 / DSM 1227 / KCTC 32145 / OM5) (Oligotropha carboxidovorans).